Here is a 653-residue protein sequence, read N- to C-terminus: Epithelial sodium channel subunit gamma (653 aa).

Topologically, residues methionine 1–leucine 55 are cytoplasmic. A helical transmembrane segment spans residues tryptophan 56–phenylalanine 76. The Extracellular portion of the chain corresponds to serine 77 to glutamine 538. 8 disulfide bridges follow: cysteine 100–cysteine 287, cysteine 211–cysteine 218, cysteine 264–cysteine 271, cysteine 376–cysteine 461, cysteine 398–cysteine 457, cysteine 402–cysteine 453, cysteine 411–cysteine 438, and cysteine 413–cysteine 427. The segment at arginine 137–serine 225 is gating release of inhibition by proteolysis (GRIP); protease-sensitive region that is responsible for the proteolytic activation of the channel. A glycan (N-linked (GlcNAc...) asparagine) is linked at asparagine 213. An N-linked (GlcNAc...) asparagine glycan is attached at asparagine 275. A glycan (N-linked (GlcNAc...) asparagine) is linked at asparagine 501. A helical membrane pass occupies residues leucine 539–isoleucine 559. Over aspartate 560 to proline 653 the chain is Cytoplasmic. Positions alanine 582–asparagine 632 are disordered. Residues proline 627 to tyrosine 631 carry the PY motif; recruits WW domain-containing proteins and is thereby required for ubiquitination and inhibition of the channel by NEDD4 and NEDD4L motif.

It belongs to the amiloride-sensitive sodium channel (TC 1.A.6) family. SCNN1G subfamily. Component of the heterotrimeric epithelial sodium channel (ENaC) composed of an alpha/SCNN1A, a beta/SCNN1B and a gamma/SCNN1G subunit. Interacts with WWP1 (via WW domains). Interacts with WWP2 (via WW domains); inhibits the channel. Interacts with the full-length immature form of PCSK9 (pro-PCSK9); inhibits ENaC by promoting its proteasomal degradation. Interacts with BPIFA1; the interaction is indirect via SCNN1B and inhibits the proteolytic maturation of SCNN1A and SCNN1G and the activation of ENaC. Phosphorylated on serine and threonine residues. Aldosterone and insulin increase the basal level of phosphorylation. In terms of processing, ubiquitinated. Can be ubiquitinated at multiple sites and undergo monoubiquitination and polyubiquitination. Ubiquitination by NEDD4 or NEDD4L inhibits the ENaC channel through endocytosis, intracellular retention and degradation of its individual subunits. Post-translationally, ENaC is activated through the proteolytic maturation of its subunits. Furin cleaves the SCNN1G subunit first, followed by cleavage by prostasin (PRSS8), which results in a stepwise increase in the open probability of the channel due to the release of an inhibitory tract. BPIFA1, which is recruited by the SCNN1B subunit, prevents the proteolytic activation of ENaC. N-glycosylated. N-linked glycans are processed to complex type during ENaC complex assembly and transport to the plasma membrane.

The protein localises to the apical cell membrane. The enzyme catalyses Na(+)(in) = Na(+)(out). Originally identified and characterized by its inhibition by the diuretic drug amiloride. Functionally, this is one of the three pore-forming subunits of the heterotrimeric epithelial sodium channel (ENaC), a critical regulator of sodium balance and fluid homeostasis. ENaC operates in epithelial tissues, where it mediates the electrodiffusion of sodium ions from extracellular fluid through the apical membrane of cells, with water following osmotically. It plays a key role in maintaining sodium homeostasis through electrogenic sodium reabsorption in the kidneys. Additionally, ENaC is essential for airway surface liquid homeostasis, which is crucial for proper mucus clearance. This Oryctolagus cuniculus (Rabbit) protein is Epithelial sodium channel subunit gamma.